The sequence spans 89 residues: Small ribosomal subunit protein bS20 (89 aa).

It belongs to the bacterial ribosomal protein bS20 family.

Binds directly to 16S ribosomal RNA. The polypeptide is Small ribosomal subunit protein bS20 (Wolbachia pipientis subsp. Culex pipiens (strain wPip)).